We begin with the raw amino-acid sequence, 346 residues long: Ly6/PLAUR domain-containing protein 3 (346 aa).

A signal peptide spans 1–30 (MDPARKAGAQAMIWTAGWLLLLLLRGGAQA). UPAR/Ly6 domains follow at residues 33–126 (CYSC…ALDP) and 140–222 (CYSC…SRCN). 4 N-linked (GlcNAc...) asparagine glycosylation sites follow: N118, N163, N176, and N183. Positions 233 to 324 (PRIPPLVRLP…KGGPQQPHNK (92 aa)) are disordered. Pro residues predominate over residues 234–246 (RIPPLVRLPPPEP). Over residues 247-269 (TTVASTTSVTTSTSAPVRPTSTT) the composition is skewed to low complexity. Residues 283-295 (GVEHEASRDEEPR) are compositionally biased toward basic and acidic residues. The GPI-anchor amidated cysteine moiety is linked to residue C326. The propeptide at 327-346 (VAPTAGLAALLLAVAAGVLL) is removed in mature form.

Binds laminin-1 and laminin-5. Interacts with LGALS3. Interacts with AGR2 and AGR3. In terms of processing, N-glycosylated and O-glycosylated. Expressed in placenta, skin and urothelium. Found in suprabasal keratinocytes of chronic wounds. Weak expression is found in esophagus and peripheral blood mononuclear cells. Found in the majority of primary and metastatic transitional cell carcinomas (TCCs) and as well in breast cancer tissues, but not in adjacent normal tissues. High expression is found in the tumor component of some noninvasive superficial lesions and in invasive and metastatic urothelial cancers.

The protein resides in the cell membrane. Functionally, supports cell migration. May be involved in urothelial cell-matrix interactions. May be involved in tumor progression. This chain is Ly6/PLAUR domain-containing protein 3 (LYPD3), found in Homo sapiens (Human).